The primary structure comprises 523 residues: GMP synthase [glutamine-hydrolyzing] (523 aa).

One can recognise a Glutamine amidotransferase type-1 domain in the interval 9–198 (PVLVVDFGAQ…LTEIAGLEQN (190 aa)). Catalysis depends on Cys86, which acts as the Nucleophile. Catalysis depends on residues His172 and Glu174. A GMPS ATP-PPase domain is found at 199 to 397 (WTAANIAEEL…LGLPEEIVGR (199 aa)). 227–233 (SGGVDSA) contacts ATP.

As to quaternary structure, homodimer.

It catalyses the reaction XMP + L-glutamine + ATP + H2O = GMP + L-glutamate + AMP + diphosphate + 2 H(+). Its pathway is purine metabolism; GMP biosynthesis; GMP from XMP (L-Gln route): step 1/1. In terms of biological role, catalyzes the synthesis of GMP from XMP. The polypeptide is GMP synthase [glutamine-hydrolyzing] (Corynebacterium glutamicum (strain ATCC 13032 / DSM 20300 / JCM 1318 / BCRC 11384 / CCUG 27702 / LMG 3730 / NBRC 12168 / NCIMB 10025 / NRRL B-2784 / 534)).